Here is a 956-residue protein sequence, read N- to C-terminus: Valine--tRNA ligase (956 aa).

A 'HIGH' region motif is present at residues 43-53 (PNITGNLHIGH). Positions 556–560 (KMSKS) match the 'KMSKS' region motif. Lysine 559 lines the ATP pocket. Positions 889–920 (PKEKELKNLNKEISKIQLAINKLQQRLSNEEF) form a coiled coil.

Belongs to the class-I aminoacyl-tRNA synthetase family. ValS type 1 subfamily. As to quaternary structure, monomer.

It is found in the cytoplasm. The catalysed reaction is tRNA(Val) + L-valine + ATP = L-valyl-tRNA(Val) + AMP + diphosphate. Catalyzes the attachment of valine to tRNA(Val). As ValRS can inadvertently accommodate and process structurally similar amino acids such as threonine, to avoid such errors, it has a 'posttransfer' editing activity that hydrolyzes mischarged Thr-tRNA(Val) in a tRNA-dependent manner. The polypeptide is Valine--tRNA ligase (Buchnera aphidicola subsp. Baizongia pistaciae (strain Bp)).